Here is a 184-residue protein sequence, read N- to C-terminus: Ribonuclease HII (184 aa).

One can recognise an RNase H type-2 domain in the interval 2–184 (AKICGIDEAG…KPKLAQSSLF (183 aa)). A divalent metal cation contacts are provided by D8, E9, and D95.

Belongs to the RNase HII family. Requires Mn(2+) as cofactor. Mg(2+) serves as cofactor.

It localises to the cytoplasm. The enzyme catalyses Endonucleolytic cleavage to 5'-phosphomonoester.. Endonuclease that specifically degrades the RNA of RNA-DNA hybrids. This chain is Ribonuclease HII, found in Campylobacter concisus (strain 13826).